The chain runs to 626 residues: tRNA uridine 5-carboxymethylaminomethyl modification enzyme MnmG (626 aa).

Residue 13-18 (GGGHAG) coordinates FAD. Position 273–287 (273–287 (GPRYCPSIEDKIHRF)) interacts with NAD(+).

Belongs to the MnmG family. As to quaternary structure, homodimer. Heterotetramer of two MnmE and two MnmG subunits. The cofactor is FAD.

It localises to the cytoplasm. Its function is as follows. NAD-binding protein involved in the addition of a carboxymethylaminomethyl (cmnm) group at the wobble position (U34) of certain tRNAs, forming tRNA-cmnm(5)s(2)U34. The chain is tRNA uridine 5-carboxymethylaminomethyl modification enzyme MnmG from Acinetobacter baumannii (strain AB307-0294).